The following is an 834-amino-acid chain: DNA-directed RNA polymerase subunit beta' (834 aa).

Residues 1–22 (MTYSNKPTGSSLRSSRNSTLEP) are compositionally biased toward polar residues. A disordered region spans residues 1–45 (MTYSNKPTGSSLRSSRNSTLEPQSLVHREESKRQEGPKGQNLRIG). Basic and acidic residues predominate over residues 26-36 (VHREESKRQEG). Zn(2+) contacts are provided by Cys-101, Cys-103, Cys-118, and Cys-121. The Mg(2+) site is built by Asp-606, Asp-608, and Asp-610.

The protein belongs to the RNA polymerase beta' chain family. RpoC1 subfamily. In terms of assembly, in plastids the minimal PEP RNA polymerase catalytic core is composed of four subunits: alpha, beta, beta', and beta''. When a (nuclear-encoded) sigma factor is associated with the core the holoenzyme is formed, which can initiate transcription. Mg(2+) is required as a cofactor. It depends on Zn(2+) as a cofactor.

It localises to the plastid. The protein localises to the chloroplast. The catalysed reaction is RNA(n) + a ribonucleoside 5'-triphosphate = RNA(n+1) + diphosphate. DNA-dependent RNA polymerase catalyzes the transcription of DNA into RNA using the four ribonucleoside triphosphates as substrates. The polypeptide is DNA-directed RNA polymerase subunit beta' (Staurastrum punctulatum (Green alga)).